The following is a 353-amino-acid chain: MNECHYDKHMDFFYNRSNTDTVDDWTGTKLVIVLCVGTFFCLFIFFSNSLVIAAVIKNRKFHFPFYYLLANLAAADFFAGIAYVFLMFNTGPVSKTLTVNRWFLRQGLLDSSLTASLTNLLVIAVERHMSIMRMRVHSNLTKKRVTLLILLVWAIAIFMGAVPTLGWNCLCNISACSSLAPIYSRSYLVFWTVSNLMAFLIMVVVYLRIYVYVKRKTNVLSPHTSGSISRRRTPMKLMKTVMTVLGAFVVCWTPGLVVLLLDGLNCRQCGVQHVKRWFLLLALLNSVVNPIIYSYKDEDMYGTMKKMICCFSQENPERRPSRIPSTVLSRSDTGSQYIEDSISQGAVCNKSTS.

The Extracellular portion of the chain corresponds to 1–31; it reads MNECHYDKHMDFFYNRSNTDTVDDWTGTKLV. Asn-15 carries an N-linked (GlcNAc...) asparagine glycan. Residues 32-52 traverse the membrane as a helical segment; that stretch reads IVLCVGTFFCLFIFFSNSLVI. The Cytoplasmic segment spans residues 53–67; that stretch reads AAVIKNRKFHFPFYY. The helical transmembrane segment at 68-88 threads the bilayer; it reads LLANLAAADFFAGIAYVFLMF. Residues 89-101 lie on the Extracellular side of the membrane; it reads NTGPVSKTLTVNR. A helical membrane pass occupies residues 102 to 124; that stretch reads WFLRQGLLDSSLTASLTNLLVIA. Residues 125 to 146 lie on the Cytoplasmic side of the membrane; sequence VERHMSIMRMRVHSNLTKKRVT. Residues 147-167 traverse the membrane as a helical segment; the sequence is LLILLVWAIAIFMGAVPTLGW. The Extracellular segment spans residues 168-186; that stretch reads NCLCNISACSSLAPIYSRS. The N-linked (GlcNAc...) asparagine glycan is linked to Asn-172. Residues 187 to 207 form a helical membrane-spanning segment; that stretch reads YLVFWTVSNLMAFLIMVVVYL. Residues 208 to 240 are Cytoplasmic-facing; it reads RIYVYVKRKTNVLSPHTSGSISRRRTPMKLMKT. A helical transmembrane segment spans residues 241–261; sequence VMTVLGAFVVCWTPGLVVLLL. At 262–276 the chain is on the extracellular side; the sequence is DGLNCRQCGVQHVKR. Residues 277–297 form a helical membrane-spanning segment; that stretch reads WFLLLALLNSVVNPIIYSYKD. The Cytoplasmic segment spans residues 298 to 353; the sequence is EDMYGTMKKMICCFSQENPERRPSRIPSTVLSRSDTGSQYIEDSISQGAVCNKSTS. Cys-309 is lipidated: S-palmitoyl cysteine.

Belongs to the G-protein coupled receptor 1 family. In terms of tissue distribution, most abundantly expressed in prostate, testes, pancreas, and heart, with moderate levels in lung and ovary. No detectable expression in brain, placenta, liver, skeletal muscle, kidney, spleen, thymus, small intestine, colon, or peripheral blood leukocytes.

Its subcellular location is the cell membrane. In terms of biological role, receptor for lysophosphatidic acid (LPA), a mediator of diverse cellular activities. May play a role in the development of ovarian cancer. Seems to be coupled to the G(i)/G(o) and G(q) families of heteromeric G proteins. The polypeptide is Lysophosphatidic acid receptor 3 (LPAR3) (Homo sapiens (Human)).